The sequence spans 407 residues: Digeranylgeranylglycerophospholipid reductase (407 aa).

FAD is bound by residues Ala15, Glu34, Cys45, Ala46, Gly48, Arg99, Ala123, Asp281, Gly293, and Ile294.

Belongs to the geranylgeranyl reductase family. DGGGPL reductase subfamily. FAD is required as a cofactor.

It catalyses the reaction a 2,3-bis-O-phytanyl-sn-glycerol 1-phospholipid + 8 oxidized 2[4Fe-4S]-[ferredoxin] = a 2,3-bis-O-(geranylgeranyl)-sn-glycerol 1-phospholipid + 8 reduced 2[4Fe-4S]-[ferredoxin] + 16 H(+). The catalysed reaction is 2,3-bis-O-(phytanyl)-sn-glycerol 1-phosphate + 8 oxidized 2[4Fe-4S]-[ferredoxin] = 2,3-bis-O-(geranylgeranyl)-sn-glycerol 1-phosphate + 8 reduced 2[4Fe-4S]-[ferredoxin] + 16 H(+). The enzyme catalyses a 2,3-bis-O-phytanyl-sn-glycerol 1-phospholipid + 8 A = a 2,3-bis-O-(geranylgeranyl)-sn-glycerol 1-phospholipid + 8 AH2. It carries out the reaction CDP-2,3-bis-O-(geranylgeranyl)-sn-glycerol + 8 AH2 = CDP-2,3-bis-O-(phytanyl)-sn-glycerol + 8 A. It catalyses the reaction archaetidylserine + 8 AH2 = 2,3-bis-O-phytanyl-sn-glycero-3-phospho-L-serine + 8 A. Its pathway is membrane lipid metabolism; glycerophospholipid metabolism. Functionally, is involved in the reduction of 2,3-digeranylgeranylglycerophospholipids (unsaturated archaeols) into 2,3-diphytanylglycerophospholipids (saturated archaeols) in the biosynthesis of archaeal membrane lipids. Catalyzes the formation of archaetidic acid (2,3-di-O-phytanyl-sn-glyceryl phosphate) from 2,3-di-O-geranylgeranylglyceryl phosphate (DGGGP) via the hydrogenation of each double bond of the isoprenoid chains. Is also probably able to reduce double bonds of geranyl groups in CDP-2,3-bis-O-(geranylgeranyl)-sn-glycerol and archaetidylserine, thus acting at various stages in the biosynthesis of archaeal membrane lipids. This Methanosarcina mazei (strain ATCC BAA-159 / DSM 3647 / Goe1 / Go1 / JCM 11833 / OCM 88) (Methanosarcina frisia) protein is Digeranylgeranylglycerophospholipid reductase.